We begin with the raw amino-acid sequence, 180 residues long: uncharacterized protein (180 aa).

The stretch at 114 to 147 (EDIYEDIVDVRLENQSLEEQLEDFKECSRALKKY) forms a coiled coil.

It belongs to the mimivirus L74/L77/R857 family.

This is an uncharacterized protein from Acanthamoeba polyphaga mimivirus (APMV).